We begin with the raw amino-acid sequence, 311 residues long: 3'(2'),5'-bisphosphate nucleotidase 1 (311 aa).

D49 (proton acceptor) is an active-site residue. The Mg(2+) site is built by E72, D116, L118, and D119. T121 functions as the Proton acceptor in the catalytic mechanism. T202, H205, G227, and K231 together coordinate AMP. Position 254 (D254) interacts with Mg(2+).

The protein belongs to the inositol monophosphatase superfamily. The cofactor is Mg(2+).

The enzyme catalyses adenosine 3',5'-bisphosphate + H2O = AMP + phosphate. It carries out the reaction adenosine 2',5'-bisphosphate + H2O = AMP + phosphate. The catalysed reaction is 3'-phosphoadenylyl sulfate + H2O = adenosine 5'-phosphosulfate + phosphate. It catalyses the reaction 1D-myo-inositol 1,4-bisphosphate + H2O = 1D-myo-inositol 4-phosphate + phosphate. The enzyme catalyses 1D-myo-inositol 1,3,4-trisphosphate + H2O = 1D-myo-inositol 3,4-bisphosphate + phosphate. Its activity is regulated as follows. Inhibited by Li(+) and Ca(2+), but not by Na(+). Its function is as follows. Phosphatase that converts 3'(2')-phosphoadenosine 5'-phosphate (PAP) to AMP and adenosine 3'-phosphate 5'-phosphosulfate (PAPS) to adenosine 5'-phosphosulfate (APS). Is also able to hydrolyze inositol 1,4-bisphosphate (Ins(1,4)P2) and inositol 1,3,4-trisphosphate (Ins(1,3,4)P3), but is not active on AMP, 3'-AMP, fructose-1,6-bisphosphate, Ins(1)P, Ins(2)P and Ins(1,4,5)P3. Probably prevents the toxic accumulation of PAP, a compound which inhibits a variety of proteins, including PAPS-utilizing enzymes such as sulfotransferases, and RNA processing enzymes. Could also play a role in inositol recycling and phosphoinositide metabolism. This is 3'(2'),5'-bisphosphate nucleotidase 1 (bpnt1) from Dictyostelium discoideum (Social amoeba).